Reading from the N-terminus, the 842-residue chain is Glycogen phosphorylase, muscle form (842 aa).

Ser2 bears the N-acetylserine mark. A Phosphoserine; by PHK; in form phosphorylase A modification is found at Ser15. Residue Ser26 is modified to Phosphoserine. Asp43 and Tyr76 together coordinate AMP. Phosphotyrosine is present on residues Tyr204 and Tyr227. 310–319 (RRFKSSKFGC) lines the AMP pocket. Ser430 bears the Phosphoserine mark. Tyr473 is modified (phosphotyrosine). Ser514 is subject to Phosphoserine. N6-(pyridoxal phosphate)lysine is present on Lys681. A phosphoserine mark is found at Ser747 and Ser748.

The protein belongs to the glycogen phosphorylase family. Homodimer. Homotetramer; to form the enzymatically active phosphorylase A. Pyridoxal 5'-phosphate serves as cofactor. In terms of processing, phosphorylation of Ser-15 converts phosphorylase B (unphosphorylated) to phosphorylase A.

It catalyses the reaction [(1-&gt;4)-alpha-D-glucosyl](n) + phosphate = [(1-&gt;4)-alpha-D-glucosyl](n-1) + alpha-D-glucose 1-phosphate. Its activity is regulated as follows. Allosterically regulated through the non-covalent binding of metabolites, being activated by AMP and inhibited by ATP, ADP, and glucose-6-phosphate. The activity is also controlled by post-translational modifications including phosphorylation. Functionally, allosteric enzyme that catalyzes the rate-limiting step in glycogen catabolism, the phosphorolytic cleavage of glycogen to produce glucose-1-phosphate, and plays a central role in maintaining cellular and organismal glucose homeostasis. The chain is Glycogen phosphorylase, muscle form from Rattus norvegicus (Rat).